The chain runs to 676 residues: Envelope glycoprotein (676 aa).

The signal sequence occupies residues 1-32; the sequence is MEGLSLLQLPRDKFRKSSFFVWVIILFQKAFS. Over 33-650 the chain is Extracellular; that stretch reads MPLGVVTNST…DDNWWTGWRQ (618 aa). Asparagine 40 carries N-linked (GlcNAc...) asparagine; by host glycosylation. 5 cysteine pairs are disulfide-bonded: cysteine 53/cysteine 609, cysteine 108/cysteine 135, cysteine 121/cysteine 147, cysteine 511/cysteine 556, and cysteine 601/cysteine 608. The interval 54 to 201 is receptor-binding; sequence KDHLASTDQL…TFLQSPPIRE (148 aa). N-linked (GlcNAc...) asparagine; by host glycans are attached at residues asparagine 204, asparagine 208, asparagine 238, asparagine 257, asparagine 268, asparagine 296, and asparagine 314. Residues 305–485 form a mucin-like region region; that stretch reads ELSFETLSLN…STSNGLITST (181 aa). The disordered stretch occupies residues 312–351; that stretch reads SLNETEDDDATSSRTTKGRISDRATRKYSDLVPKDSPGMV. A compositionally biased stretch (basic and acidic residues) spans 330 to 344; sequence RISDRATRKYSDLVP. Asparagine 366 is a glycosylation site (N-linked (GlcNAc...) asparagine; by host). The disordered stretch occupies residues 406–458; that stretch reads SSSQILSSSPTMAPSPETQTSTTYTPKLPVMTTEEPTTPPRNSPGSTTEAPTL. Composition is skewed to polar residues over residues 415–430 and 448–458; these read PTMA…TTYT and SPGSTTEAPTL. Asparagine 463 is a glycosylation site (N-linked (GlcNAc...) asparagine; by host). Residues 524 to 539 are fusion peptide; the sequence is HNAAGIAWIPYFGPGA. Residues 554–595 adopt a coiled-coil conformation; that stretch reads LVCGLRQLANETTQALQLFLRATTELRTYTILNRKAIDFLLR. The N-linked (GlcNAc...) asparagine; by host glycan is linked to asparagine 563. Residues 615–634 are a coiled coil; that stretch reads WTKNITDKINQIIHDFIDNP. A glycan (N-linked (GlcNAc...) asparagine; by host) is linked at asparagine 618. A helical transmembrane segment spans residues 651-671; the sequence is WIPAGIGITGIIIAIIALLCV. Residues cysteine 670 and cysteine 672 are each lipidated (S-palmitoyl cysteine; by host). At 672 to 676 the chain is on the cytoplasmic side; the sequence is CKLLC.

This sequence belongs to the filoviruses glycoprotein family. In terms of assembly, homotrimer; each monomer consists of a GP1 and a GP2 subunit linked by disulfide bonds. The resulting peplomers (GP1,2) protrude from the virus surface as spikes. Interacts with host integrin alpha-V/ITGAV. Interacts with host CLEC10A. Binds also to host CD209 and CLEC4M/DC-SIGN(R). Interacts with host FOLR1. Interacts with BST2; this interaction inhibits the antiviral effect of BST2 and this allows viral release from infected cells. Interacts with host FCN1; this interaction enhances viral entry. Interacts with host TLR4; this interaction induces cell death in T-lymphocytes or proinflammatory cytokines and SOCS1 production in monocytes. Interacts with host entry receptor NPC1. As to quaternary structure, GP1 and GP2delta are part of GP1,2delta soluble complexes released by ectodomain shedding. The signal peptide region modulates GP's high mannose glycosylation, thereby determining the efficiency of the interactions with DC-SIGN(R). Post-translationally, N-glycosylated. In terms of processing, O-glycosylated in the mucin-like region. Palmitoylation of GP2 is not required for its function. Post-translationally, specific enzymatic cleavages in vivo yield mature proteins. The precursor is processed into GP1 and GP2 by host cell furin in the trans Golgi, and maybe by other host proteases, to yield the mature GP1 and GP2 proteins. The cleavage site corresponds to the furin optimal cleavage sequence [KR]-X-[KR]-R. This cleavage does not seem to be required for function. After the internalization of the virus into cell endosomes, GP1 C-terminus is removed by the endosomal proteases cathepsin B, cathepsin L, or both, leaving a 19-kDa N-terminal fragment which is further digested by cathepsin B. Proteolytic processing of GP1,2 by host ADAM17 can remove the transmembrane anchor of GP2 and leads to shedding of complexes consisting in GP1 and truncated GP2 (GP1,2delta).

Its subcellular location is the virion membrane. The protein localises to the host cell membrane. The protein resides in the secreted. Functionally, trimeric GP1,2 complexes form the virion surface spikes and mediate the viral entry processes, with GP1 acting as the receptor-binding subunit and GP2 as the membrane fusion subunit. At later times of infection, down-regulates the expression of various host cell surface molecules that are essential for immune surveillance and cell adhesion. Down-modulates several integrins including ITGA1, ITGA2, ITGA3, ITGA4, ITGA5, ITGA6, ITGAV and ITGB1. This decrease in cell adhesion molecules may lead to cell detachment, contributing to the disruption of blood vessel integrity and hemorrhages developed during infection (cytotoxicity). Interacts with host TLR4 and thereby stimulates the differentiation and activation of monocytes leading to bystander death of T-lymphocytes. Down-regulates as well the function of host natural killer cells. Counteracts the antiviral effect of host BST2/tetherin that restricts release of progeny virions from infected cells. However, cooperates with VP40 and host BST2 to activate canonical NF-kappa-B pathway in a manner dependent on neddylation. In terms of biological role, functions as a decoy for anti-GP1,2 antibodies thereby contributing to viral immune evasion. Interacts and activates host macrophages and dendritic cells inducing up-regulation of cytokine transcription. This effect is mediated throught activation of host TLR4. Its function is as follows. Responsible for binding to the receptor(s) on target cells. Interacts with CD209/DC-SIGN and CLEC4M/DC-SIGNR which act as cofactors for virus entry into dendritic cells (DCs) and endothelial cells. Binding to the macrophage specific lectin CLEC10A also seems to enhance virus infectivity. Interaction with FOLR1/folate receptor alpha may be a cofactor for virus entry in some cell types, although results are contradictory. Members of the Tyro3 receptor tyrosine kinase family also seem to be cell entry factors in filovirus infection. Once attached, the virions are internalized through clathrin-dependent endocytosis and/or macropinocytosis. After internalization of the virus into the endosomes of the host cell, proteolysis of GP1 by two cysteine proteases, CTSB/cathepsin B and CTSL/cathepsin L removes the glycan cap and allows GP1 binding to the host entry receptor NPC1. NPC1-binding, Ca(2+) and acidic pH induce a conformational change of GP2, which unmasks its fusion peptide and permit membranes fusion. Acts as a class I viral fusion protein. Under the current model, the protein has at least 3 conformational states: pre-fusion native state, pre-hairpin intermediate state, and post-fusion hairpin state. During viral and target cell membrane fusion, the coiled coil regions (heptad repeats) assume a trimer-of-hairpins structure, positioning the fusion peptide in close proximity to the C-terminal region of the ectodomain. The formation of this structure appears to drive apposition and subsequent fusion of viral and target cell membranes. Responsible for penetration of the virus into the cell cytoplasm by mediating the fusion of the membrane of the endocytosed virus particle with the endosomal membrane. Low pH in endosomes induces an irreversible conformational change in GP2, releasing the fusion hydrophobic peptide. The polypeptide is Envelope glycoprotein (GP) (Sudan ebolavirus (strain Maleo-79) (SEBOV)).